The primary structure comprises 128 residues: Translation initiation factor 5A (128 aa).

Lys-35 carries the post-translational modification Hypusine.

Belongs to the eIF-5A family.

Its subcellular location is the cytoplasm. Its function is as follows. Functions by promoting the formation of the first peptide bond. In Methanocella arvoryzae (strain DSM 22066 / NBRC 105507 / MRE50), this protein is Translation initiation factor 5A (eIF5A).